Reading from the N-terminus, the 450-residue chain is Serine/threonine-protein kinase-transforming protein Rmil (450 aa).

Basic and acidic residues-rich tracts occupy residues 1 to 14 (MEAV…DQGV) and 49 to 73 (QRER…RDSS). The tract at residues 1–80 (MEAVIKDLIR…DSSDDWEIPD (80 aa)) is disordered. In terms of domain architecture, Protein kinase spans 83 to 343 (ITVGQRIGSG…PQILASIELL (261 aa)). Residues 89-97 (IGSGSFGTV) and lysine 109 contribute to the ATP site. Aspartate 202 acts as the Proton acceptor in catalysis.

The protein belongs to the protein kinase superfamily. TKL Ser/Thr protein kinase family. RAF subfamily.

The catalysed reaction is L-seryl-[protein] + ATP = O-phospho-L-seryl-[protein] + ADP + H(+). It carries out the reaction L-threonyl-[protein] + ATP = O-phospho-L-threonyl-[protein] + ADP + H(+). The polypeptide is Serine/threonine-protein kinase-transforming protein Rmil (V-RMIL) (Avian rous-associated virus type 1).